Reading from the N-terminus, the 352-residue chain is Putative squamosa promoter-binding-like protein 19 (352 aa).

The disordered stretch occupies residues 68–88; that stretch reads AAAPATRRARGGSGGGGGGGG. Gly residues predominate over residues 78–88; it reads GGSGGGGGGGG. The segment at 90–167 adopts an SBP-type zinc-finger fold; the sequence is AEACSVDGCR…DGHNRRRRKP (78 aa). Positions 93, 98, 115, 118, 134, 137, 141, and 153 each coordinate Zn(2+). Positions 150–166 match the Bipartite nuclear localization signal motif; it reads KKSCRKRLDGHNRRRRK. A disordered region spans residues 152-174; sequence SCRKRLDGHNRRRRKPQHDALNP.

It is found in the nucleus. Trans-acting factor that binds specifically to the consensus nucleotide sequence 5'-TNCGTACAA-3'. The protein is Putative squamosa promoter-binding-like protein 19 (SPL19) of Oryza sativa subsp. japonica (Rice).